We begin with the raw amino-acid sequence, 501 residues long: Trans-cinnamate 4-monooxygenase (501 aa).

The helical transmembrane segment at 3–23 (LVLLEKALLGLFAAAVLAVAV) threads the bilayer. Residues 213–218 (RSRLSQ) and Ala-302 contribute to the (E)-cinnamate site. Cys-443 is a heme binding site.

This sequence belongs to the cytochrome P450 family. Heme serves as cofactor.

The protein localises to the membrane. It catalyses the reaction (E)-cinnamate + reduced [NADPH--hemoprotein reductase] + O2 = (E)-4-coumarate + oxidized [NADPH--hemoprotein reductase] + H2O + H(+). The protein operates within phenylpropanoid metabolism; trans-4-coumarate biosynthesis; trans-4-coumarate from trans-cinnamate: step 1/1. In terms of biological role, catalyzes the first oxidative step of the phenylpropanoid pathway in higher plants by transforming trans-cinnamate into p-coumarate. The compounds formed by this pathway are essential components for lignification, pollination, and defense against ultraviolet light, predators and pathogens. Can also use 2-naphthoic acid as substrate. In Sorghum bicolor (Sorghum), this protein is Trans-cinnamate 4-monooxygenase.